We begin with the raw amino-acid sequence, 396 residues long: S-adenosylmethionine synthase (396 aa).

Glu12 is a Mg(2+) binding site. His18 is an ATP binding site. Glu46 serves as a coordination point for K(+). L-methionine is bound by residues Glu59 and Gln102. Residues 170 to 172 (DGK), 238 to 241 (SGRF), Asp249, 255 to 256 (RK), Ala272, Lys276, and Lys280 each bind ATP. Asp249 lines the L-methionine pocket. Residue Lys280 coordinates L-methionine.

This sequence belongs to the AdoMet synthase family. In terms of assembly, homotetramer. Mn(2+) is required as a cofactor. The cofactor is Mg(2+). It depends on Co(2+) as a cofactor. Requires K(+) as cofactor.

The protein resides in the cytoplasm. The catalysed reaction is L-methionine + ATP + H2O = S-adenosyl-L-methionine + phosphate + diphosphate. It participates in amino-acid biosynthesis; S-adenosyl-L-methionine biosynthesis; S-adenosyl-L-methionine from L-methionine: step 1/1. Functionally, catalyzes the formation of S-adenosylmethionine from methionine and ATP. The reaction comprises two steps that are both catalyzed by the same enzyme: formation of S-adenosylmethionine (AdoMet) and triphosphate, and subsequent hydrolysis of the triphosphate. The chain is S-adenosylmethionine synthase (SAMS) from Triticum aestivum (Wheat).